The primary structure comprises 405 residues: Tryptophan synthase beta chain (405 aa).

K98 is subject to N6-(pyridoxal phosphate)lysine.

It belongs to the TrpB family. As to quaternary structure, tetramer of two alpha and two beta chains. Pyridoxal 5'-phosphate is required as a cofactor.

It catalyses the reaction (1S,2R)-1-C-(indol-3-yl)glycerol 3-phosphate + L-serine = D-glyceraldehyde 3-phosphate + L-tryptophan + H2O. The protein operates within amino-acid biosynthesis; L-tryptophan biosynthesis; L-tryptophan from chorismate: step 5/5. Its function is as follows. The beta subunit is responsible for the synthesis of L-tryptophan from indole and L-serine. The chain is Tryptophan synthase beta chain from Xanthomonas euvesicatoria pv. vesicatoria (strain 85-10) (Xanthomonas campestris pv. vesicatoria).